We begin with the raw amino-acid sequence, 369 residues long: Peptidyl-prolyl cis-trans isomerase D (369 aa).

In terms of domain architecture, PPIase cyclophilin-type spans 7-175 (YFDISCNGKP…EDWKIADCGE (169 aa)). TPR repeat units lie at residues 217–250 (VSKIKDIGTKLLKEGKLEKSYEKYTKANSYLNDY), 268–301 (LSCYLNAALVALKLKHGKDAIAAANNALEVEQID), and 306–339 (TKALYRKGMGYILVKDEEQAQKILEEALELEPND).

This sequence belongs to the cyclophilin-type PPIase family. PPIase D subfamily.

Its subcellular location is the cytoplasm. It catalyses the reaction [protein]-peptidylproline (omega=180) = [protein]-peptidylproline (omega=0). In terms of biological role, PPIases accelerate the folding of proteins. It catalyzes the cis-trans isomerization of proline imidic peptide bonds in oligopeptides. This is Peptidyl-prolyl cis-trans isomerase D (CPR6) from Candida albicans (strain SC5314 / ATCC MYA-2876) (Yeast).